Consider the following 373-residue polypeptide: Flagellar P-ring protein (373 aa).

The first 26 residues, 1–26 (MKLFFRFVTLVAVLAMSLANVAPAWA), serve as a signal peptide directing secretion.

Belongs to the FlgI family. As to quaternary structure, the basal body constitutes a major portion of the flagellar organelle and consists of four rings (L,P,S, and M) mounted on a central rod.

The protein localises to the periplasm. Its subcellular location is the bacterial flagellum basal body. In terms of biological role, assembles around the rod to form the L-ring and probably protects the motor/basal body from shearing forces during rotation. The protein is Flagellar P-ring protein of Rhizobium johnstonii (strain DSM 114642 / LMG 32736 / 3841) (Rhizobium leguminosarum bv. viciae).